A 75-amino-acid polypeptide reads, in one-letter code: uncharacterized protein (75 aa).

This is an uncharacterized protein from Escherichia coli (Bacteriophage T4).